The following is a 229-amino-acid chain: Orotidine 5'-phosphate decarboxylase (229 aa).

Substrate contacts are provided by residues D10, K32, 59–68 (DLKFHDIPNT), T119, R180, Q189, G209, and R210. K61 serves as the catalytic Proton donor.

The protein belongs to the OMP decarboxylase family. Type 1 subfamily. As to quaternary structure, homodimer.

It carries out the reaction orotidine 5'-phosphate + H(+) = UMP + CO2. The protein operates within pyrimidine metabolism; UMP biosynthesis via de novo pathway; UMP from orotate: step 2/2. In terms of biological role, catalyzes the decarboxylation of orotidine 5'-monophosphate (OMP) to uridine 5'-monophosphate (UMP). In Legionella pneumophila (strain Lens), this protein is Orotidine 5'-phosphate decarboxylase.